The sequence spans 490 residues: Tektin-3 (490 aa).

3 O-linked (GalNAc...) threonine glycosylation sites follow: Thr-7, Thr-9, and Thr-11. N-linked (GlcNAc...) asparagine glycans are attached at residues Asn-41, Asn-86, Asn-111, and Asn-276. A coiled-coil region spans residues 415–461 (MAQLRLVNEVYEVDETIQTLQQRLRDSEDTLQSLAHTKATLEHDLAV).

This sequence belongs to the tektin family. Microtubule inner protein component of sperm flagellar doublet microtubules. Interacts with TEKT1, TEKT2, TEKT4 and TEKT5. Interacts with CCDC38. Post-translationally, N- and O-glycosylated. In terms of processing, ubiquitinated, leading to its degradation. Deubiquitinated by USP16, promoting its stability. May be proteolytically processed during the epididymal transit of spermatozoa. As to expression, expressed preferentially in testis. Expressed predominantly in late pachytene spermatocytes and early round spermatids. Expressed in spermatozoa.

The protein resides in the cytoplasm. The protein localises to the cytoskeleton. Its subcellular location is the cilium axoneme. It is found in the flagellum axoneme. It localises to the cytoplasmic vesicle. The protein resides in the secretory vesicle. The protein localises to the acrosome outer membrane. Its function is as follows. Microtubule inner protein (MIP) part of the dynein-decorated doublet microtubules (DMTs) in cilia and flagellar axoneme. Forms filamentous polymers in the walls of ciliary and flagellar microtubules. Required for normal sperm mobility. The polypeptide is Tektin-3 (Tekt3) (Mus musculus (Mouse)).